The primary structure comprises 367 residues: Methylthioribose-1-phosphate isomerase (367 aa).

Substrate-binding positions include 54–56 (RGA), R91, and Q201. The active-site Proton donor is D242. Substrate is bound at residue 252 to 253 (NK).

The protein belongs to the eIF-2B alpha/beta/delta subunits family. MtnA subfamily.

The catalysed reaction is 5-(methylsulfanyl)-alpha-D-ribose 1-phosphate = 5-(methylsulfanyl)-D-ribulose 1-phosphate. It participates in amino-acid biosynthesis; L-methionine biosynthesis via salvage pathway; L-methionine from S-methyl-5-thio-alpha-D-ribose 1-phosphate: step 1/6. Functionally, catalyzes the interconversion of methylthioribose-1-phosphate (MTR-1-P) into methylthioribulose-1-phosphate (MTRu-1-P). This Acidiphilium cryptum (strain JF-5) protein is Methylthioribose-1-phosphate isomerase.